A 226-amino-acid polypeptide reads, in one-letter code: 3-isopropylmalate dehydratase small subunit (226 aa).

The disordered stretch occupies residues 204-226 (EAETVESAREPEAVEWAGPLADR).

The protein belongs to the LeuD family. LeuD type 1 subfamily. As to quaternary structure, heterodimer of LeuC and LeuD.

It carries out the reaction (2R,3S)-3-isopropylmalate = (2S)-2-isopropylmalate. Its pathway is amino-acid biosynthesis; L-leucine biosynthesis; L-leucine from 3-methyl-2-oxobutanoate: step 2/4. Catalyzes the isomerization between 2-isopropylmalate and 3-isopropylmalate, via the formation of 2-isopropylmaleate. This is 3-isopropylmalate dehydratase small subunit from Bifidobacterium animalis subsp. lactis (strain AD011).